The following is a 489-amino-acid chain: Hyaluronoglucuronidase (489 aa).

The Proton donor role is filled by glutamate 176. The active-site Nucleophile is glutamate 290.

This sequence belongs to the glycosyl hydrolase 79 family.

The enzyme catalyses Random hydrolysis of (1-&gt;3)-linkages between beta-D-glucuronate and N-acetyl-D-glucosamine residues in hyaluronate.. With respect to regulation, hyaluronidase activity is inhibited by Mn(2+), Cu(2+) and Fe(3+). Its function is as follows. Hyaluronidase that mediates hydrolysis of (1-&gt;3)-linkages between beta-D-glucuronate and N-acetyl-D-glucosamine residues in hyaluronate. Very specific to hyaluronate: not able to hydrolyze chitin, heparin or chondroitin sulfate. This chain is Hyaluronoglucuronidase, found in Hirudo nipponia (Korean blood-sucking leech).